A 139-amino-acid chain; its full sequence is MKKTAVLNAQLSGVIASLGHTDGLTICDAGLPIPSEQQCVDLALTKGVPSFLSTLEVVLTELFVERILLAEEIKQANPTIEQQLLEMINKLAQTQGRQIEIEYVVHSEFKQRSNQAKAVVRTGECSPYANVILYSGVPF.

Residue H20 is the Proton donor of the active site. Residues D28, H106, and 128-130 contribute to the substrate site; that span reads YAN.

The protein belongs to the RbsD / FucU family. RbsD subfamily. As to quaternary structure, homodecamer.

It localises to the cytoplasm. It carries out the reaction beta-D-ribopyranose = beta-D-ribofuranose. It functions in the pathway carbohydrate metabolism; D-ribose degradation; D-ribose 5-phosphate from beta-D-ribopyranose: step 1/2. Functionally, catalyzes the interconversion of beta-pyran and beta-furan forms of D-ribose. In Actinobacillus pleuropneumoniae serotype 5b (strain L20), this protein is D-ribose pyranase.